We begin with the raw amino-acid sequence, 286 residues long: NAD kinase (286 aa).

The Proton acceptor role is filled by Asp-74. NAD(+) contacts are provided by residues 74 to 75, 148 to 149, Asp-178, Ala-186, 189 to 194, and Gln-244; these read DG, ND, and TAYNLS.

It belongs to the NAD kinase family. A divalent metal cation serves as cofactor.

Its subcellular location is the cytoplasm. The enzyme catalyses NAD(+) + ATP = ADP + NADP(+) + H(+). In terms of biological role, involved in the regulation of the intracellular balance of NAD and NADP, and is a key enzyme in the biosynthesis of NADP. Catalyzes specifically the phosphorylation on 2'-hydroxyl of the adenosine moiety of NAD to yield NADP. The sequence is that of NAD kinase from Campylobacter jejuni subsp. jejuni serotype O:23/36 (strain 81-176).